A 405-amino-acid chain; its full sequence is MSISYFMKKIVILGSTGSIGTSTLSVITHNPDKYQVFALVGGRNVELMFQQCLTFQPSFAALDDDVAAKMLAEKLKAHQSQTTVLAGQQAICELAAHPEADMVMAAIVGAAGLLPTLSAVKAGKRVLLANKEALVTCGQLFIDAVRESQAQLLPVDSEHNAIFQSLPPEAQRQIGFCPLSELGISKIVLTGSGGPFRYTPLEQFEQITPAQAVAHPNWSMGKKISVDSATMMNKGLEYIEARWLFNASAEEMEVIIHPQSIIHSMVRYIDGSVIAQMGNPDMRTPIAETMAYPSRTVAGVEPLDFYQLNGLTFIEPDYQRYPCLKLAIDAFSAGQYATTAMNAANEIAVASFLDNKIKFTDIARLNQLVVSKLQPQKIHCIEDVLEVDKKARELSQSIILSFSHP.

NADPH is bound by residues threonine 16, glycine 17, serine 18, isoleucine 19, glycine 42, arginine 43, asparagine 44, and asparagine 130. Lysine 131 serves as a coordination point for 1-deoxy-D-xylulose 5-phosphate. Glutamate 132 serves as a coordination point for NADPH. Aspartate 156 lines the Mn(2+) pocket. The 1-deoxy-D-xylulose 5-phosphate site is built by serine 157, glutamate 158, serine 192, and histidine 215. Position 158 (glutamate 158) interacts with Mn(2+). Glycine 221 is an NADPH binding site. Residues serine 228, asparagine 233, lysine 234, and glutamate 237 each coordinate 1-deoxy-D-xylulose 5-phosphate. Glutamate 237 serves as a coordination point for Mn(2+).

The protein belongs to the DXR family. Requires Mg(2+) as cofactor. The cofactor is Mn(2+).

The enzyme catalyses 2-C-methyl-D-erythritol 4-phosphate + NADP(+) = 1-deoxy-D-xylulose 5-phosphate + NADPH + H(+). The protein operates within isoprenoid biosynthesis; isopentenyl diphosphate biosynthesis via DXP pathway; isopentenyl diphosphate from 1-deoxy-D-xylulose 5-phosphate: step 1/6. Functionally, catalyzes the NADPH-dependent rearrangement and reduction of 1-deoxy-D-xylulose-5-phosphate (DXP) to 2-C-methyl-D-erythritol 4-phosphate (MEP). This Pasteurella multocida (strain Pm70) protein is 1-deoxy-D-xylulose 5-phosphate reductoisomerase.